The primary structure comprises 445 residues: Bifunctional protein GlmU (445 aa).

Positions 1–218 (MRALVLAAGK…LLEITGVNTR (218 aa)) are pyrophosphorylase. UDP-N-acetyl-alpha-D-glucosamine contacts are provided by residues 6 to 9 (LAAG), K20, Q69, 74 to 75 (GT), 96 to 98 (YGD), G134, E147, N162, and N216. D98 provides a ligand contact to Mg(2+). Mg(2+) is bound at residue N216. A linker region spans residues 219–239 (KTLVWLEEQLRMRKIEELLEN). The segment at 240-445 (GVTILDPATT…GWVLKKRKEE (206 aa)) is N-acetyltransferase. UDP-N-acetyl-alpha-D-glucosamine-binding residues include R321 and K339. H351 functions as the Proton acceptor in the catalytic mechanism. Y354 and N365 together coordinate UDP-N-acetyl-alpha-D-glucosamine. Residues A368, 374-375 (NY), S393, A411, and R428 each bind acetyl-CoA.

In the N-terminal section; belongs to the N-acetylglucosamine-1-phosphate uridyltransferase family. It in the C-terminal section; belongs to the transferase hexapeptide repeat family. In terms of assembly, homotrimer. It depends on Mg(2+) as a cofactor.

It localises to the cytoplasm. The enzyme catalyses alpha-D-glucosamine 1-phosphate + acetyl-CoA = N-acetyl-alpha-D-glucosamine 1-phosphate + CoA + H(+). It carries out the reaction N-acetyl-alpha-D-glucosamine 1-phosphate + UTP + H(+) = UDP-N-acetyl-alpha-D-glucosamine + diphosphate. The protein operates within nucleotide-sugar biosynthesis; UDP-N-acetyl-alpha-D-glucosamine biosynthesis; N-acetyl-alpha-D-glucosamine 1-phosphate from alpha-D-glucosamine 6-phosphate (route II): step 2/2. It participates in nucleotide-sugar biosynthesis; UDP-N-acetyl-alpha-D-glucosamine biosynthesis; UDP-N-acetyl-alpha-D-glucosamine from N-acetyl-alpha-D-glucosamine 1-phosphate: step 1/1. It functions in the pathway bacterial outer membrane biogenesis; LPS lipid A biosynthesis. Catalyzes the last two sequential reactions in the de novo biosynthetic pathway for UDP-N-acetylglucosamine (UDP-GlcNAc). The C-terminal domain catalyzes the transfer of acetyl group from acetyl coenzyme A to glucosamine-1-phosphate (GlcN-1-P) to produce N-acetylglucosamine-1-phosphate (GlcNAc-1-P), which is converted into UDP-GlcNAc by the transfer of uridine 5-monophosphate (from uridine 5-triphosphate), a reaction catalyzed by the N-terminal domain. The polypeptide is Bifunctional protein GlmU (Thermotoga petrophila (strain ATCC BAA-488 / DSM 13995 / JCM 10881 / RKU-1)).